The sequence spans 283 residues: MVIQWFPGHMAKARREVTEKLKLIDIVYELVDARIPMSSRNPMIEDILKNKPRIMLLNKADKADSSVTKAWKQHFEKDGIPTLAINSVNGQGLNQILPASKELLKEKFDKMKAKGVKPRAIRALIVGIPNVGKSTLINRLAKKNIAKTGDRPGVTTAQQWVKVGKELELLDTPGILWPKFEDELVGLRLAATGAIKDSIINLQDVAVYGLRFLEENYPERLKKRYDLEEIPEEIAALFDEIGKKRGCLMAGGEINYDKTTEVIIRDIRTEKFGPLSFEKPEDM.

A CP-type G domain is found at 14–178 (RREVTEKLKL…LLDTPGILWP (165 aa)). Residues 58–61 (NKAD), 86–87 (NS), 130–135 (NVGKST), and glycine 174 contribute to the GTP site.

This sequence belongs to the TRAFAC class YlqF/YawG GTPase family. MTG1 subfamily. In terms of assembly, interacts with ctc. Interacts with the immature 50S ribosome subunit. 2 molecules of rbgA bind to one 50S subunit.

It is found in the cytoplasm. In terms of biological role, essential protein that is required for a late step of 50S ribosomal subunit assembly. Has GTPase activity that is stimulated by interaction with the immature 50S ribosome subunit. Binds to the 23S rRNA. Required for the association of ribosomal proteins rplP and rpmA with the large subunit. This chain is Ribosome biogenesis GTPase A, found in Bacillus licheniformis (strain ATCC 14580 / DSM 13 / JCM 2505 / CCUG 7422 / NBRC 12200 / NCIMB 9375 / NCTC 10341 / NRRL NRS-1264 / Gibson 46).